A 162-amino-acid polypeptide reads, in one-letter code: Regulator of ribonuclease activity A (162 aa).

This sequence belongs to the RraA family. Homotrimer. Binds to both RNA-binding sites in the C-terminal region of Rne and to RhlB.

Its subcellular location is the cytoplasm. In terms of biological role, globally modulates RNA abundance by binding to RNase E (Rne) and regulating its endonucleolytic activity. Can modulate Rne action in a substrate-dependent manner by altering the composition of the degradosome. Modulates RNA-binding and helicase activities of the degradosome. The protein is Regulator of ribonuclease activity A of Haemophilus influenzae (strain 86-028NP).